The primary structure comprises 90 residues: Long neurotoxin 1 (90 aa).

The N-terminal stretch at Met-1–Ser-21 is a signal peptide. Intrachain disulfides connect Cys-24–Cys-42, Cys-35–Cys-63, Cys-48–Cys-52, Cys-67–Cys-78, and Cys-79–Cys-84.

Belongs to the three-finger toxin family. Long-chain subfamily. Type II alpha-neurotoxin sub-subfamily. In terms of tissue distribution, expressed by the venom gland.

Its subcellular location is the secreted. Functionally, binds with high affinity to muscular (alpha-1/CHRNA1) and neuronal (alpha-7/CHRNA7) nicotinic acetylcholine receptor (nAChR) and inhibits acetylcholine from binding to the receptor, thereby impairing neuromuscular and neuronal transmission. The sequence is that of Long neurotoxin 1 from Austrelaps superbus (Lowland copperhead snake).